Here is a 634-residue protein sequence, read N- to C-terminus: DNA-directed RNA polymerase subunit gamma (634 aa).

Zn(2+) contacts are provided by Cys74, Cys76, Cys89, and Cys92. Mg(2+)-binding residues include Asp471, Asp473, and Asp475.

This sequence belongs to the RNA polymerase beta' chain family. RpoC1 subfamily. As to quaternary structure, in cyanobacteria the RNAP catalytic core is composed of 2 alpha, 1 beta, 1 beta', 1 gamma and 1 omega subunit. When a sigma factor is associated with the core the holoenzyme is formed, which can initiate transcription. The cofactor is Mg(2+). Zn(2+) serves as cofactor.

The enzyme catalyses RNA(n) + a ribonucleoside 5'-triphosphate = RNA(n+1) + diphosphate. Functionally, DNA-dependent RNA polymerase catalyzes the transcription of DNA into RNA using the four ribonucleoside triphosphates as substrates. The polypeptide is DNA-directed RNA polymerase subunit gamma (Synechococcus sp. (strain RCC307)).